The chain runs to 571 residues: Hemagglutinin-neuraminidase (571 aa).

Residues 1–26 (MDRAVSRVALENEEREAKNTWRFVFR) lie on the Intravirion side of the membrane. The chain crosses the membrane as a helical span at residues 27–47 (IAILLLIVITLAISAAALVYS). Residues 48-571 (MEASTPGDLV…LVEILKNDGV (524 aa)) are Virion surface-facing. An N-linked (GlcNAc...) asparagine; by host glycan is attached at asparagine 119. The important for interaction with fusion/F protein stretch occupies residues 124 to 152 (GAPVHDPDYIGGIGKELIVDDASDVTSFY). 3 disulfide bridges follow: cysteine 172-cysteine 196, cysteine 186-cysteine 247, and cysteine 238-cysteine 251. The interval 234-239 (NRKSCS) is involved in neuraminidase activity. N-linked (GlcNAc...) asparagine; by host glycans are attached at residues asparagine 341 and asparagine 433. 2 cysteine pairs are disulfide-bonded: cysteine 344-cysteine 461 and cysteine 455-cysteine 465. N-linked (GlcNAc...) asparagine; by host glycosylation is found at asparagine 481, asparagine 508, and asparagine 538.

It belongs to the paramyxoviruses hemagglutinin-neuraminidase family. As to quaternary structure, homotetramer; composed of disulfide-linked homodimers. Interacts with F protein trimer. Interacts with host CG-1B; this interaction inhibits viral adsorption and replication rather than internalization.

The protein resides in the virion membrane. Its subcellular location is the host cell membrane. The catalysed reaction is Hydrolysis of alpha-(2-&gt;3)-, alpha-(2-&gt;6)-, alpha-(2-&gt;8)- glycosidic linkages of terminal sialic acid residues in oligosaccharides, glycoproteins, glycolipids, colominic acid and synthetic substrates.. In terms of biological role, mediates the viral entry into the host cell together with fusion/F protein. Attaches the virus to sialic acid-containing cell receptors and thereby initiates infection. Binding of HN protein to the receptor induces a conformational change that allows the F protein to trigger virion/cell membranes fusion. Functionally, neuraminidase activity ensures the efficient spread of the virus by dissociating the mature virions from the neuraminic acid containing glycoproteins. This chain is Hemagglutinin-neuraminidase (HN), found in Gallus gallus (Chicken).